Consider the following 335-residue polypeptide: Partner of xrn-2 protein 1 (335 aa).

One can recognise an XRN2-binding (XTBD) domain in the interval 7-91 (VEAEKKLWES…SYVKASAAKK (85 aa)). The interval 95-119 (VKTSDLEGASDESKKVKMEKSPSPV) is disordered. The segment covering 105–114 (DESKKVKMEK) has biased composition (basic and acidic residues).

Interacts (via N-terminus) with xrn-2; the interaction is direct.

The protein localises to the nucleus. It localises to the nucleolus. Its subcellular location is the nucleoplasm. Functionally, plays a role in maintenance of steady-state concentration and turnover of microRNAs (miRNA) by degradation of mature miRNA in complex with the exoribonuclease xrn-2. Stabilizes and enhances the accumulation and activity of the exoribonuclease xrn-2, and thus contributes to miRNA turnover. The sequence is that of Partner of xrn-2 protein 1 from Caenorhabditis elegans.